The sequence spans 270 residues: A-type potassium channel modulatory protein KCNIP2 (270 aa).

The segment covering Met1–Asp17 has biased composition (basic and acidic residues). The segment at Met1–Ala34 is disordered. Phosphoserine is present on Ser9. 2 S-palmitoyl cysteine lipidation sites follow: Cys45 and Cys46. The region spanning Phe81–Pro137 is the EF-hand 1; degenerate domain. 3 consecutive EF-hand domains span residues Asp140–Gly175, Thr176–Met211, and Ala224–Ile259. Ca(2+) is bound by residues Asp153, Asn155, Asp157, Ser159, Asp164, Asp189, Asn191, Asp193, Cys195, Glu200, Asp237, Asn239, Asp241, and Glu248. The segment at Glu257–Ile270 is interaction with KCND2.

The protein belongs to the recoverin family. Component of heteromultimeric potassium channels. Identified in potassium channel complexes containing KCND1, KCND2, KCND3, KCNIP1, KCNIP2, KCNIP3, KCNIP4, DPP6 and DPP10. The KCND2-KCNIP2 channel complex contains four KCND2 and four KCNIP2 subunits. Interacts with KCND2. Probably part of a complex consisting of KCNIP1, KCNIP2 isoform 3 and KCND2. At least isoform 2 and isoform 3 can self-associate to form homodimers and homotetramers. Isoform 3 interacts with KCNIP1 in a calcium-dependent manner. Interacts with KCND3; each KCNIP2 monomer interacts with two adjacent KCND3 subunits, through both the N-terminal inactivation ball of a KCND3 subunit and a C-terminal helix from the adjacent KCND3 subunit, clamping them together; this interaction modulates the channel gating kinetics. Palmitoylated. Palmitoylation enhances association with the plasma membrane. Expressed in heart, brain and lung. In brain, abundantly expressed in striatum, hippocampus and olfactory bulb, moderately expressed in cerebral cortex and lowly expressed in thalamus and hypothalamus. Isoform 1 is predominant in cerebral cortex, striatum and hippocampus. Isoform 1, isoform 2 and isoform 3 are equally expressed in olfactory bulb. Iisoform 3 is expressed at high levels and isoform 1 at low levels in heart (in PubMed:11263977).

It is found in the cell membrane. Regulatory subunit of Kv4/D (Shal)-type voltage-gated rapidly inactivating A-type potassium channels. Modulates channel density, inactivation kinetics and rate of recovery from inactivation in a calcium-dependent and isoform-specific manner. Involved in KCND2 and KCND3 trafficking to the cell surface. Essential for the expression of I(To) currents in the heart. Required for normal protein levels of KCND2 in the heart ventricle. This is A-type potassium channel modulatory protein KCNIP2 from Rattus norvegicus (Rat).